The primary structure comprises 209 residues: Redox-sensing transcriptional repressor Rex (209 aa).

The segment at residues 16–55 is a DNA-binding region (H-T-H motif); the sequence is LYYRFIQNLSLSGKQRVSSAELSEAVKVDSATIRRDFSYF. Position 90–95 (90–95) interacts with NAD(+); the sequence is GVGNLG.

The protein belongs to the transcriptional regulatory Rex family. In terms of assembly, homodimer.

It localises to the cytoplasm. Modulates transcription in response to changes in cellular NADH/NAD(+) redox state. The sequence is that of Redox-sensing transcriptional repressor Rex from Bacillus cereus (strain ATCC 10987 / NRS 248).